The chain runs to 572 residues: uncharacterized protein (572 aa).

A disordered region spans residues 553 to 572 (PSPAPKPVTVRKKKGNSPIS). The span at 561–572 (TVRKKKGNSPIS) shows a compositional bias: basic residues.

This is an uncharacterized protein from Homo sapiens (Human).